A 215-amino-acid chain; its full sequence is Vesicle transport protein SFT2C (215 aa).

Residues 1–82 are Cytoplasmic-facing; sequence MADLHRQLQE…RGQRLAAGGG (82 aa). Residues 83–103 traverse the membrane as a helical segment; that stretch reads CLLLAALCFGLAALYAPVLLL. Residues 104-107 are Lumenal-facing; the sequence is RARK. Residues 108-128 traverse the membrane as a helical segment; it reads FALLWSLGSALALAGSALLRG. At 129–142 the chain is on the cytoplasmic side; it reads GAACGRLLRCEEAP. The chain crosses the membrane as a helical span at residues 143–163; the sequence is SRPALLYMAALGATLFAALGL. Residues 164–166 lie on the Lumenal side of the membrane; the sequence is RST. Residues 167–187 form a helical membrane-spanning segment; sequence LLTVLGAGAQVAALLAALVGL. Residues 188 to 215 are Cytoplasmic-facing; it reads LPWGGGTALRLALGRLGRGAGLAKVLPV.

This sequence belongs to the SFT2 family.

The protein resides in the membrane. Functionally, may be involved in fusion of retrograde transport vesicles derived from an endocytic compartment with the Golgi complex. The sequence is that of Vesicle transport protein SFT2C from Homo sapiens (Human).